The sequence spans 545 residues: MSRKQSQKDSSGFIFDLQSNTVLAQGGTFENMKEKINAVRAIVPNKSNNEIILVLQHFDNCVDKTVQAFMEGSASEVLKEWIVTGKKKNKKKKSKPKPASEASGSAPDSSKSAPIQEEQPASSEKGSINGYHVNGAINDAESVDSLSEGLETLSIDARELEDPEFAAAETLDRTGSVLENGVSDFEPKSLTAHSISNVQQSRNAAKSLSRTTPGAQVSNLGMENVPLSSTNKKLGSNIEKSVKDLQRCTVSLARYRVVVKEEMDASIKKMKQAFAELQSCLMDREVALLAEMDKVKAEAMEILLSRQKKAELLKKMTDVAVRMSEEQLVELRADIKHFVSERKYDEDLGRVARFTCDVETLKQSIDSFGQVSHPKNSYSTRSRCSLVAPVSLSGPSDGSAASSSPDASVPSLPGANKRNCAPREASAAMTNSSDRPCQAHREVFPGNRRGGQGYRAQSQKTADPSNPGRHDSVGRYRNSSWYSSGPRYQGVPPQAPGNAGERSRPYSAGTNGTGAISEPSPPKPSFKKGLPQRKPRASQAEAANS.

Positions Lys-87–Pro-96 are enriched in basic residues. The disordered stretch occupies residues Lys-87–Val-133. Low complexity predominate over residues Lys-97 to Pro-107. The segment covering Asp-108 to Gly-126 has biased composition (polar residues). Residues Ser-142, Ser-145, and Ser-147 each carry the phosphoserine modification. Disordered stretches follow at residues Arg-202–Lys-232 and Val-390–Ser-545. Residues Ser-391–Pro-413 show a composition bias toward low complexity. Residues Arg-455–Pro-464 show a composition bias toward polar residues. The residue at position 520 (Ser-520) is a Phosphoserine.

It belongs to the SPATS2 family. Detected in testis, in spermatocytes and round spermatids (at protein level). Highly expressed in testis, and detected at lower levels in brain, heart, thymus, skeletal muscle, ovary, stomach and lung.

The protein localises to the cytoplasm. The sequence is that of Spermatogenesis-associated serine-rich protein 2 (Spats2) from Mus musculus (Mouse).